The following is a 213-amino-acid chain: SEAPAETAAPAPAEKSPAKKKKAAKKPGAGAAKRKAAGPPVSELITKAVAASKERNGLSLAALKKALAAGGYDVEKNNSRIKLGLKSLVSKGTLVETKGTGASGSFKLDKKAASGEAKPKPKKAGAAKPKKPAGATPKKPKKAAGAKKAVKKTPKKAPKPKAAAKPKVAKPKSPAKVAKSPKKAKAVKPKAAKPKAPKPKAAKAKKTAAKKKK.

Ser-1 bears the N-acetylserine mark. Over residues 1–15 the composition is skewed to low complexity; that stretch reads SEAPAETAAPAPAEK. Positions 1–41 are disordered; it reads SEAPAETAAPAPAEKSPAKKKKAAKKPGAGAAKRKAAGPPV. Lys-15 is subject to N6-acetyllysine. An N6-(beta-hydroxybutyryl)lysine mark is found at Lys-35 and Lys-53. Residues 37–110 enclose the H15 domain; that stretch reads AGPPVSELIT…GASGSFKLDK (74 aa). Arg-55 is modified (citrulline). An N6-(beta-hydroxybutyryl)lysine mark is found at Lys-65, Lys-86, and Lys-91. The disordered stretch occupies residues 92–213; the sequence is GTLVETKGTG…AKKTAAKKKK (122 aa). Ser-105 carries the phosphoserine modification. At Lys-107 the chain carries N6-(beta-hydroxybutyryl)lysine. Over residues 107–119 the composition is skewed to basic and acidic residues; it reads KLDKKAASGEAKP. Composition is skewed to basic residues over residues 120-131, 138-170, and 179-213; these read KPKKAGAAKPKK, KKPK…KVAK, and KSPK…KKKK.

The protein belongs to the histone H1/H5 family. In terms of processing, H1 histones are progressively phosphorylated during the cell cycle, becoming maximally phosphorylated during late G2 phase and M phase, and being dephosphorylated sharply thereafter. Post-translationally, citrullination at Arg-55 (H1R54ci) by PADI4 takes place within the DNA-binding site of H1 and results in its displacement from chromatin and global chromatin decondensation, thereby promoting pluripotency and stem cell maintenance.

The protein resides in the nucleus. It is found in the chromosome. Its function is as follows. Histones H1 are necessary for the condensation of nucleosome chains into higher-order structures. The polypeptide is Histone H1.3 (Oryctolagus cuniculus (Rabbit)).